An 806-amino-acid chain; its full sequence is Ent-atiserene synthase KSL4, chloroplastic (806 aa).

A chloroplast-targeting transit peptide spans 1–75 (MGIVALILIK…AKLFKKNEVC (75 aa)). Residues 33-56 (ASLAGSGLPKTTPPKTASLQSHSP) are disordered. The segment covering 45 to 55 (PPKTASLQSHS) has biased composition (polar residues). Positions 556, 560, 700, and 708 each coordinate Mg(2+). The DDXXD motif motif lies at 556 to 560 (DDLFD).

The protein belongs to the terpene synthase family. Mg(2+) serves as cofactor. In terms of tissue distribution, highly expressed in leaves, and, at low levels, in roots, stems and flowers.

The protein resides in the plastid. The protein localises to the chloroplast. The enzyme catalyses ent-copalyl diphosphate = ent-atiserene + diphosphate. The protein operates within secondary metabolite biosynthesis; terpenoid biosynthesis. In terms of biological role, involved in the biosynthesis of ent-kaurene diterpenoids natural products such as oridonin, miltiradiene, eriocalyxin B and nezukol, known to exhibit antitumor, anti-inflammatory and antibacterial activities. Catalyzes the conversion of ent-copalyl diphosphate (ent-CPP) to ent-atiserene. In Isodon rubescens (Rabdosia rubescens), this protein is Ent-atiserene synthase KSL4, chloroplastic.